A 567-amino-acid chain; its full sequence is Urease subunit alpha (567 aa).

Residues Gly-129–Phe-567 form the Urease domain. His-134, His-136, and Lys-217 together coordinate Ni(2+). Position 217 is an N6-carboxylysine (Lys-217). Substrate is bound at residue His-219. Ni(2+) contacts are provided by His-246 and His-272. Residue His-320 is the Proton donor of the active site. Asp-360 contributes to the Ni(2+) binding site.

It belongs to the metallo-dependent hydrolases superfamily. Urease alpha subunit family. As to quaternary structure, probable heterotrimer of UreA (gamma), UreB (beta) and UreC (alpha) subunits. Three heterotrimers associate to form the active enzyme. The trimeric urease interacts with an accessory complex composed of UreD, UreF and UreG, which is required for the assembly of the nickel containing metallocenter of UreC. The UreE protein may also play a direct role in nickel transfer to the urease apoprotein. Ni cation is required as a cofactor. In terms of processing, carboxylation allows a single lysine to coordinate two nickel ions.

It is found in the cytoplasm. The enzyme catalyses urea + 2 H2O + H(+) = hydrogencarbonate + 2 NH4(+). It participates in nitrogen metabolism; urea degradation; CO(2) and NH(3) from urea (urease route): step 1/1. This chain is Urease subunit alpha, found in Proteus mirabilis (strain HI4320).